Here is a 785-residue protein sequence, read N- to C-terminus: Endonuclease MutS2 (785 aa).

331-338 (GPNTGGKT) contributes to the ATP binding site. The region spanning 710-785 (LDLRGLYADE…GLGVTVVELA (76 aa)) is the Smr domain.

Belongs to the DNA mismatch repair MutS family. MutS2 subfamily. In terms of assembly, homodimer. Binds to stalled ribosomes, contacting rRNA.

Functionally, endonuclease that is involved in the suppression of homologous recombination and thus may have a key role in the control of bacterial genetic diversity. Its function is as follows. Acts as a ribosome collision sensor, splitting the ribosome into its 2 subunits. Detects stalled/collided 70S ribosomes which it binds and splits by an ATP-hydrolysis driven conformational change. Acts upstream of the ribosome quality control system (RQC), a ribosome-associated complex that mediates the extraction of incompletely synthesized nascent chains from stalled ribosomes and their subsequent degradation. Probably generates substrates for RQC. This chain is Endonuclease MutS2, found in Pelotomaculum thermopropionicum (strain DSM 13744 / JCM 10971 / SI).